Here is a 321-residue protein sequence, read N- to C-terminus: Large ribosomal RNA subunit accumulation protein YCED homolog 1, chloroplastic (321 aa).

Residues 1–32 (MSLVCSLSCVAPLPQTKQSRPSFLKLETCTLS) constitute a chloroplast transit peptide.

The protein belongs to the DUF177 domain family.

It is found in the plastid. The protein resides in the chloroplast stroma. It localises to the chloroplast nucleoid. Plays a role in synthesis, processing and/or stability of 23S rRNA. Required for embryogenesis. This Arabidopsis thaliana (Mouse-ear cress) protein is Large ribosomal RNA subunit accumulation protein YCED homolog 1, chloroplastic.